A 1220-amino-acid chain; its full sequence is DNA-directed RNA polymerase subunit beta' (1220 aa).

Zn(2+) contacts are provided by Cys-61, Cys-63, Cys-76, and Cys-79. 3 residues coordinate Mg(2+): Asp-450, Asp-452, and Asp-454. Positions 1197 to 1220 (QPEVEQEPTPDIPKLDDVAKSFEE) are disordered. Over residues 1209 to 1220 (PKLDDVAKSFEE) the composition is skewed to basic and acidic residues.

This sequence belongs to the RNA polymerase beta' chain family. As to quaternary structure, the RNAP catalytic core consists of 2 alpha, 1 beta, 1 beta' and 1 omega subunit. When a sigma factor is associated with the core the holoenzyme is formed, which can initiate transcription. It depends on Mg(2+) as a cofactor. Zn(2+) is required as a cofactor.

The enzyme catalyses RNA(n) + a ribonucleoside 5'-triphosphate = RNA(n+1) + diphosphate. DNA-dependent RNA polymerase catalyzes the transcription of DNA into RNA using the four ribonucleoside triphosphates as substrates. This Leuconostoc citreum (strain KM20) protein is DNA-directed RNA polymerase subunit beta'.